A 132-amino-acid chain; its full sequence is uncharacterized protein (132 aa).

Positions 1–18 (MRKIISMLFIPLFIFAMA) are cleaved as a signal peptide.

This is an uncharacterized protein from Aquifex aeolicus (strain VF5).